The following is a 211-amino-acid chain: Histidine biosynthesis bifunctional protein HisIE (211 aa).

Residues 1 to 122 form a phosphoribosyl-AMP cyclohydrolase region; sequence MSFKTAEVSS…DPQEESQMVW (122 aa). The interval 123-211 is phosphoribosyl-ATP pyrophosphohydrolase; the sequence is LHQLEQLLAA…VINKLKERHK (89 aa).

It in the N-terminal section; belongs to the PRA-CH family. The protein in the C-terminal section; belongs to the PRA-PH family.

It localises to the cytoplasm. The enzyme catalyses 1-(5-phospho-beta-D-ribosyl)-ATP + H2O = 1-(5-phospho-beta-D-ribosyl)-5'-AMP + diphosphate + H(+). It carries out the reaction 1-(5-phospho-beta-D-ribosyl)-5'-AMP + H2O = 1-(5-phospho-beta-D-ribosyl)-5-[(5-phospho-beta-D-ribosylamino)methylideneamino]imidazole-4-carboxamide. The protein operates within amino-acid biosynthesis; L-histidine biosynthesis; L-histidine from 5-phospho-alpha-D-ribose 1-diphosphate: step 2/9. Its pathway is amino-acid biosynthesis; L-histidine biosynthesis; L-histidine from 5-phospho-alpha-D-ribose 1-diphosphate: step 3/9. The polypeptide is Histidine biosynthesis bifunctional protein HisIE (Vibrio vulnificus (strain CMCP6)).